The chain runs to 308 residues: Polyketide transferase claH (308 aa).

The tract at residues 50–280 (SDIAVYFSQQ…RVEVAAGKSH (231 aa)) is abhydrolase domain.

It belongs to the polyketide transferase af380 family.

It participates in secondary metabolite biosynthesis. Functionally, polyketide transferase; part of the cla gene cluster that produces clavatol and ortho-quinone methide. The clavatol biosynthesis cluster cla and the terrestric acid cluster tra are both involved in the production of peniphenones and penilactones. The non-reducing PKS claF is responsible for the formation of clavatol from successive condensations of 3 malonyl-CoA units, presumably with a simple acetyl-CoA starter unit, and 2 methylation steps. The esterase claE probably collaborates with claF by catalyzing the hydrolysis of ACP-bound acyl intermediates to free the ACP from stalled intermediates. The clavatol oxidase claD then converts clavatol to hydroxyclavatol. Spontaneous dehydration of hydroxyclavatol leads to the accumulation of the highly active ortho-quinone methide. On the other hand, the PKS-NRPS hybrid traA is involved in the formation of crustosic acid, with the help of traB and traD. The polyketide synthase module (PKS) of traA is responsible for the synthesis of the polyketide backbone via the condensation of an acetyl-CoA starter unit with 3 malonyl-CoA units. The downstream nonribosomal peptide synthetase (NRPS) module then amidates the carboxyl end of the polyketide with L-malic acid. Because traA lacks a designated enoylreductase (ER) domain, the required activity is provided the enoyl reductase traG. Crustosic acid undergoes decarboxylation and isomerization to the terrestric acid, catalyzed by the 2-oxoglutarate-dependent dioxygenase traH. Both acids are further converted to the 2 gamma-butyrolactones (R)-5-methyltetronic acid and (S)-5-carboxylmethyltetronic acid, with involvement of the cytochrome P450 monooxygenase claJ. Spontaneous addition of the methide to these gamma-butyrolactones leads to peniphenone D and penilactone D, which undergo again stereospecific attacking by methide to give penilactones A and B. The function of the polyketide transferase claH has not been investigated yet. The chain is Polyketide transferase claH from Penicillium crustosum (Blue mold fungus).